Here is a 274-residue protein sequence, read N- to C-terminus: NADPH-dependent 7-cyano-7-deazaguanine reductase (274 aa).

Substrate is bound at residue 80 to 82 (VES). 82-83 (SK) contributes to the NADPH binding site. The Thioimide intermediate role is filled by cysteine 181. Aspartate 188 (proton donor) is an active-site residue. 220–221 (HE) lines the substrate pocket. Residue 249-250 (RG) coordinates NADPH.

It belongs to the GTP cyclohydrolase I family. QueF type 2 subfamily. As to quaternary structure, homodimer.

It is found in the cytoplasm. It catalyses the reaction 7-aminomethyl-7-carbaguanine + 2 NADP(+) = 7-cyano-7-deazaguanine + 2 NADPH + 3 H(+). It functions in the pathway tRNA modification; tRNA-queuosine biosynthesis. Its function is as follows. Catalyzes the NADPH-dependent reduction of 7-cyano-7-deazaguanine (preQ0) to 7-aminomethyl-7-deazaguanine (preQ1). The protein is NADPH-dependent 7-cyano-7-deazaguanine reductase of Burkholderia vietnamiensis (strain G4 / LMG 22486) (Burkholderia cepacia (strain R1808)).